The following is a 401-amino-acid chain: 8-amino-7-oxononanoate synthase (401 aa).

R19 provides a ligand contact to substrate. 106–107 (GY) is a pyridoxal 5'-phosphate binding site. H131 contributes to the substrate binding site. Pyridoxal 5'-phosphate is bound by residues S176, H204, and T233. K236 carries the post-translational modification N6-(pyridoxal phosphate)lysine. T350 is a substrate binding site.

It belongs to the class-II pyridoxal-phosphate-dependent aminotransferase family. BioF subfamily. Homodimer. Requires pyridoxal 5'-phosphate as cofactor.

The catalysed reaction is 6-carboxyhexanoyl-[ACP] + L-alanine + H(+) = (8S)-8-amino-7-oxononanoate + holo-[ACP] + CO2. It participates in cofactor biosynthesis; biotin biosynthesis. Its function is as follows. Catalyzes the decarboxylative condensation of pimeloyl-[acyl-carrier protein] and L-alanine to produce 8-amino-7-oxononanoate (AON), [acyl-carrier protein], and carbon dioxide. The chain is 8-amino-7-oxononanoate synthase from Pseudomonas aeruginosa (strain LESB58).